Consider the following 834-residue polypeptide: Leucine--tRNA ligase (834 aa).

The 'HIGH' region motif lies at 36–46 (PYPSGKIHVGH). The short motif at 602 to 606 (KMSKS) is the 'KMSKS' region element. Lys-605 is an ATP binding site.

This sequence belongs to the class-I aminoacyl-tRNA synthetase family.

It is found in the cytoplasm. The catalysed reaction is tRNA(Leu) + L-leucine + ATP = L-leucyl-tRNA(Leu) + AMP + diphosphate. The sequence is that of Leucine--tRNA ligase from Rickettsia canadensis (strain McKiel).